The sequence spans 262 residues: Glutamate racemase (262 aa).

Residues 10–11 and 42–43 contribute to the substrate site; these read DS and FG. C74 functions as the Proton donor/acceptor in the catalytic mechanism. Position 75-76 (75-76) interacts with substrate; the sequence is NT. The active-site Proton donor/acceptor is C189. Residue 190 to 191 coordinates substrate; that stretch reads TH.

It belongs to the aspartate/glutamate racemases family.

The catalysed reaction is L-glutamate = D-glutamate. The protein operates within cell wall biogenesis; peptidoglycan biosynthesis. Its function is as follows. Provides the (R)-glutamate required for cell wall biosynthesis. The protein is Glutamate racemase of Mesorhizobium japonicum (strain LMG 29417 / CECT 9101 / MAFF 303099) (Mesorhizobium loti (strain MAFF 303099)).